A 502-amino-acid polypeptide reads, in one-letter code: UDP-N-acetylmuramoylalanine--D-glutamate ligase (502 aa).

Residue 136 to 142 participates in ATP binding; it reads GTNGKTT.

This sequence belongs to the MurCDEF family.

Its subcellular location is the cytoplasm. It catalyses the reaction UDP-N-acetyl-alpha-D-muramoyl-L-alanine + D-glutamate + ATP = UDP-N-acetyl-alpha-D-muramoyl-L-alanyl-D-glutamate + ADP + phosphate + H(+). Its pathway is cell wall biogenesis; peptidoglycan biosynthesis. Its function is as follows. Cell wall formation. Catalyzes the addition of glutamate to the nucleotide precursor UDP-N-acetylmuramoyl-L-alanine (UMA). In Corynebacterium jeikeium (strain K411), this protein is UDP-N-acetylmuramoylalanine--D-glutamate ligase.